Here is a 520-residue protein sequence, read N- to C-terminus: tRNA (guanine-N(7)-)-methyltransferase non-catalytic subunit TRM82 (520 aa).

The interval 51–102 (PLDSEISPDRASSAGTCAEPPEKRRKLTPPVDESGEAQTEQSAKAKARKSQT) is disordered. WD repeat units lie at residues 105 to 145 (QAWS…KLTQ), 244 to 291 (GHVS…HIIH), and 296 to 338 (GHTS…QTIP).

Belongs to the WD repeat TRM82 family. In terms of assembly, forms a heterodimer with the catalytic subunit TRM8.

It is found in the nucleus. The protein operates within tRNA modification; N(7)-methylguanine-tRNA biosynthesis. Functionally, required for the formation of N(7)-methylguanine at position 46 (m7G46) in tRNA. In the complex, it is required to stabilize and induce conformational changes of the catalytic subunit. The protein is tRNA (guanine-N(7)-)-methyltransferase non-catalytic subunit TRM82 of Coccidioides immitis (strain RS) (Valley fever fungus).